A 79-amino-acid polypeptide reads, in one-letter code: MGGFTSIWHWVIVLLVIVLLFGAKKIPELAKGLGSGIKNFKKAVKDDEEEAKNELKTLDAQATQTKVHETSEIKSKQES.

Residues 1 to 21 (MGGFTSIWHWVIVLLVIVLLF) form a helical membrane-spanning segment. The tract at residues 54–79 (ELKTLDAQATQTKVHETSEIKSKQES) is disordered. Positions 66 to 79 (KVHETSEIKSKQES) are enriched in basic and acidic residues.

Belongs to the TatA/E family. The Tat system comprises two distinct complexes: a TatABC complex, containing multiple copies of TatA, TatB and TatC subunits, and a separate TatA complex, containing only TatA subunits. Substrates initially bind to the TatABC complex, which probably triggers association of the separate TatA complex to form the active translocon.

It localises to the cell inner membrane. Its function is as follows. Part of the twin-arginine translocation (Tat) system that transports large folded proteins containing a characteristic twin-arginine motif in their signal peptide across membranes. TatA could form the protein-conducting channel of the Tat system. The protein is Sec-independent protein translocase protein TatA of Helicobacter pylori (strain J99 / ATCC 700824) (Campylobacter pylori J99).